We begin with the raw amino-acid sequence, 193 residues long: Oleosin S1-2 (193 aa).

Position 2 is an N-acetylalanine (alanine 2). The segment at 2 to 39 is polar; that stretch reads ADVRTHAHQVQVHPLRQHEGGIKVVYPQSGPSSTQVLA. Helical transmembrane passes span 37–57, 66–86, and 87–107; these read VLAVVAGVPVGGTLLTLAGLT, ILAFPLFLIFSPVIVPAAFVI, and GLAMTGFMASGAIGLTGLSSM. The segment at 40–113 is hydrophobic; it reads VVAGVPVGGT…LSSMSWVLNH (74 aa). A disordered region spans residues 139 to 193; that stretch reads AGQRTKDAGQTIEDKAHDVRESKTYDVRDRDTKGHTASGGDRDTKTTREVRVATT. Residues 142 to 193 show a composition bias toward basic and acidic residues; the sequence is RTKDAGQTIEDKAHDVRESKTYDVRDRDTKGHTASGGDRDTKTTREVRVATT.

The protein belongs to the oleosin family.

Its subcellular location is the lipid droplet. The protein resides in the membrane. Functionally, may have a structural role to stabilize the lipid body during desiccation of the seed by preventing coalescence of the oil. Probably interacts with both lipid and phospholipid moieties of lipid bodies. May also provide recognition signals for specific lipase anchorage in lipolysis during seedling growth. This Brassica napus (Rape) protein is Oleosin S1-2 (S1).